The primary structure comprises 433 residues: MSKIVKVLGREIIDSRGNPTVEAEVHLEGGFVGMAAAPSGASTGSREALELRDGDKSRFLGKGVLKALAAVNGPIADALVGKDAKDQATIDQIMIDLDGTENKSNFGANAILAVSLANAKAAAAAKGMPLYEHIAELNGTPGVFSMPLPMMNIINGGEHADNNVDIQEFMIQPVGAKTLKEAVRMGAEVFHNLAKVLKSKGYNTAVGDEGGFAPNLKSNAEALEVIAEAVAAAGYKLGTDITLAMDCAASEFYDAEKKEYNLKGEGRIFTSNGFSDFLEELTEKFPIVSIEDGLDESDWEGFAYQTEKLGKKIQIVGDDLFVTNTKILKRGIDNGIANSILIKFNQIGSLTETLAAIKMAKDAGYTAVISHRSGETEDATIADLAVGTAAGQIKTGSMSRSDRVAKYNQLIRIEEALGSRAPFNGLKEVKGQA.

Q167 provides a ligand contact to (2R)-2-phosphoglycerate. Catalysis depends on E209, which acts as the Proton donor. Mg(2+) is bound by residues D246, E291, and D318. The (2R)-2-phosphoglycerate site is built by K343, R372, S373, and K394. Catalysis depends on K343, which acts as the Proton acceptor.

The protein belongs to the enolase family. As to quaternary structure, component of the RNA degradosome, a multiprotein complex involved in RNA processing and mRNA degradation. It depends on Mg(2+) as a cofactor.

The protein resides in the cytoplasm. The protein localises to the secreted. Its subcellular location is the cell surface. It catalyses the reaction (2R)-2-phosphoglycerate = phosphoenolpyruvate + H2O. It functions in the pathway carbohydrate degradation; glycolysis; pyruvate from D-glyceraldehyde 3-phosphate: step 4/5. Its function is as follows. Catalyzes the reversible conversion of 2-phosphoglycerate (2-PG) into phosphoenolpyruvate (PEP). It is essential for the degradation of carbohydrates via glycolysis. The chain is Enolase from Vibrio cholerae serotype O1 (strain ATCC 39541 / Classical Ogawa 395 / O395).